We begin with the raw amino-acid sequence, 183 residues long: Nodulation protein L (183 aa).

The protein belongs to the transferase hexapeptide repeat family.

Functionally, acetyltransferase implicated in the O-acetylation of Nod factors. This is Nodulation protein L (nodL) from Rhizobium meliloti (strain 1021) (Ensifer meliloti).